Consider the following 419-residue polypeptide: Histidine--tRNA ligase (419 aa).

This sequence belongs to the class-II aminoacyl-tRNA synthetase family. Homodimer.

It localises to the cytoplasm. The catalysed reaction is tRNA(His) + L-histidine + ATP = L-histidyl-tRNA(His) + AMP + diphosphate + H(+). The protein is Histidine--tRNA ligase of Caldicellulosiruptor saccharolyticus (strain ATCC 43494 / DSM 8903 / Tp8T 6331).